Here is a 335-residue protein sequence, read N- to C-terminus: Ankyrin repeat and SOCS box protein 1 (335 aa).

6 ANK repeats span residues 36–68, 77–106, 110–139, 143–172, 191–220, and 235–265; these read CEDT…RINE, LPCT…EVDL, KGQT…DPNG, HRST…DVDV, LVVC…NPDF, and SPGC…NLNL. Positions 286–335 constitute an SOCS box domain; it reads LQVFKEARSVPRTLLCLCRVAVRRALGKHRLHLIPSLPLPDPIKKFLLHE.

Belongs to the ankyrin SOCS box (ASB) family. In terms of assembly, interacts with CUL5 and RNF7. Interacts with TAB2 and TAB3.

It localises to the cytoplasm. It participates in protein modification; protein ubiquitination. Probable substrate-recognition component of a SCF-like ECS (Elongin-Cullin-SOCS-box protein) E3 ligase complex which mediates the ubiquitination and subsequent proteasomal degradation of target proteins. Mediates Notch-induced ubiquitination and degradation of TCF3/E2A and JAK2. Functions as a tumor suppressor by enhancing CHCHD3 'Lys-48'-linked ubiquitination, leading to inhibition of the CHCHD3/ROS signaling pathway. Suppresses TAB2-linked 'Lys-48' polyubiquitination and consequently facilitates the initiation of NF-kappa-B and MAPK signaling cascades. May play a role in testis development. The sequence is that of Ankyrin repeat and SOCS box protein 1 (ASB1) from Homo sapiens (Human).